Consider the following 107-residue polypeptide: U1-lycotoxin-Ls1m (107 aa).

The signal sequence occupies residues 1 to 20; sequence MMKVLVVVALLVTLISYSSS. A propeptide spanning residues 21–41 is cleaved from the precursor; sequence EGIDDLEADELLSLMANEQTR. 4 disulfide bridges follow: cysteine 44–cysteine 59, cysteine 51–cysteine 68, cysteine 58–cysteine 86, and cysteine 70–cysteine 84.

Belongs to the neurotoxin 19 (CSTX) family. 04 (U1-Lctx) subfamily. Expressed by the venom gland.

Its subcellular location is the secreted. In Lycosa singoriensis (Wolf spider), this protein is U1-lycotoxin-Ls1m.